A 410-amino-acid chain; its full sequence is MSLRKRSAQTQMWESPVMSQGKQSLLELPLKESPPKDSGLKAVPSTHTLYVSHLNPQFSVPVLACLLRDTLERLELPVARGQIEVVRRPRNTYALVQVAAPKAVLASLPWRLQMALEEQLILKELTARGKELVLSEALESLHHREQEDSGPSPSHSPGPSPGPSPGLRHPPLPQLADPSPIWGSAGRRQISQNRPSGVRSDSAIVHHKILGQEQLFQGAFLGSETRNMEFKRGSGEYLSLAFKHHVRRYVCAFLNSEGGSLLVGVEDSGLVQGIHCSHRDEDRTRLLVDSILQGFKPQVFPDAYTLTFIPVISTTTTSTPLKVLRLTVHTPKAQGEPQLYETDQGEVFLRRDGSIQGPLSVGAIQDWCRQKWAMELGKLEEKVKVLTLEKEQLQQQLRQRQPLSCSCCVL.

2 disordered regions span residues 1 to 20 and 141 to 199; these read MSLR…VMSQ and LHHR…SGVR. The segment covering 8 to 20 has biased composition (polar residues); that stretch reads AQTQMWESPVMSQ. Over residues 154–173 the composition is skewed to pro residues; sequence SHSPGPSPGPSPGLRHPPLP. 264-271 provides a ligand contact to ATP; sequence GVEDSGLV. A coiled-coil region spans residues 370–401; sequence QKWAMELGKLEEKVKVLTLEKEQLQQQLRQRQ.

Belongs to the Schlafen family. Subgroup I subfamily.

This chain is Schlafen-like protein 1 (Slfnl1), found in Mus musculus (Mouse).